Consider the following 156-residue polypeptide: Hexachlorocyclohexane dehydrochlorinase 2 (156 aa).

The active site involves Asp-25. The active-site Proton acceptor is His-73.

Belongs to the HCH dehydrochlorinase family. Homotrimer.

Its subcellular location is the periplasm. The catalysed reaction is gamma-hexachlorocyclohexane = (3R,4S,5S,6R)-pentachlorocyclohexene + chloride + H(+). The enzyme catalyses (3R,4S,5S,6R)-pentachlorocyclohexene = (3R,6R)-1,3,4,6-tetrachlorocyclohexa-1,4-diene + chloride + H(+). Its pathway is xenobiotic degradation; hexachlorocyclohexane degradation. In terms of biological role, catalyzes the conversion of the important environmental pollutant gamma-hexachlorocyclohexane (gamma-HCH or lindane) to 1,3,4,6-tetrachloro-1,4-cyclohexadiene (1,4-TCDN) via gamma-pentachlorocyclohexene (gamma-PCCH). Proceeds by two successive 1,2-anti conformationally dependent dehydrochlorinations. Also shows activity with alpha- and delta-HCH, giving alpha- and delta-PCCH respectively, but not with the beta isomer. The sequence is that of Hexachlorocyclohexane dehydrochlorinase 2 from Sphingobium indicum (strain DSM 16412 / CCM 7286 / MTCC 6364 / B90A).